A 407-amino-acid polypeptide reads, in one-letter code: MEERRVSISSITWRFPMLFAPVDDVTTIDDLTLDPYPIYRRMRVQNPVVHVASVRRTFLTKAFDTKMVKDDPSRFSSDDPSTPMKPAFQAHTLMRKDGTEHARERMAMARAFAPKAIADHWAPIYRDIVNEYLDRLPRGDTVDLFAEICGPVAARILAHILGICEASDVEIIRWSQRLIDGAGNFGWRSELFERSDEANAEMNCLFNDLVKKHRSAPNPSAFATMLNAPDPIPLSQIYANIKIAIGGGVNEPRDALGTILYGLLTNPEQLEEVKRQQCWGQAFEEGLRWVAPIQASSRLVREDTEIRGFIVPKGDIVMTIQASANRDEDVFEDGESFNVFRPKSAHQSFGSGPHHCPGAQISRQTVGAIMLPILFDRFPDMILPHPELVQWRGFGFRGPINLPVTLR.

C356 is a heme binding site.

It belongs to the cytochrome P450 family. Requires heme as cofactor.

Not essential for virulence, but may be involved in the detoxification of plant protective agents at the site of wounding. The protein is Cytochrome P450-pinF2, plant-inducible (cyp104) of Rhizobium radiobacter (Agrobacterium tumefaciens).